The chain runs to 363 residues: Aminomethyltransferase (363 aa).

This sequence belongs to the GcvT family. As to quaternary structure, the glycine cleavage system is composed of four proteins: P, T, L and H.

The enzyme catalyses N(6)-[(R)-S(8)-aminomethyldihydrolipoyl]-L-lysyl-[protein] + (6S)-5,6,7,8-tetrahydrofolate = N(6)-[(R)-dihydrolipoyl]-L-lysyl-[protein] + (6R)-5,10-methylene-5,6,7,8-tetrahydrofolate + NH4(+). Its function is as follows. The glycine cleavage system catalyzes the degradation of glycine. The polypeptide is Aminomethyltransferase (Thermotoga neapolitana (strain ATCC 49049 / DSM 4359 / NBRC 107923 / NS-E)).